Consider the following 274-residue polypeptide: Dermonecrotic toxin SdSicTox-betaIIB1biii (274 aa).

The active site involves histidine 5. The Mg(2+) site is built by glutamate 25 and aspartate 27. Histidine 41 functions as the Nucleophile in the catalytic mechanism. 2 disulfide bridges follow: cysteine 45–cysteine 51 and cysteine 47–cysteine 190. Residue aspartate 85 participates in Mg(2+) binding.

Belongs to the arthropod phospholipase D family. Class II subfamily. Mg(2+) serves as cofactor. In terms of tissue distribution, expressed by the venom gland.

The protein localises to the secreted. The catalysed reaction is an N-(acyl)-sphingosylphosphocholine = an N-(acyl)-sphingosyl-1,3-cyclic phosphate + choline. It carries out the reaction an N-(acyl)-sphingosylphosphoethanolamine = an N-(acyl)-sphingosyl-1,3-cyclic phosphate + ethanolamine. It catalyses the reaction a 1-acyl-sn-glycero-3-phosphocholine = a 1-acyl-sn-glycero-2,3-cyclic phosphate + choline. The enzyme catalyses a 1-acyl-sn-glycero-3-phosphoethanolamine = a 1-acyl-sn-glycero-2,3-cyclic phosphate + ethanolamine. Its function is as follows. Dermonecrotic toxins cleave the phosphodiester linkage between the phosphate and headgroup of certain phospholipids (sphingolipid and lysolipid substrates), forming an alcohol (often choline) and a cyclic phosphate. This toxin acts on sphingomyelin (SM). It may also act on ceramide phosphoethanolamine (CPE), lysophosphatidylcholine (LPC) and lysophosphatidylethanolamine (LPE), but not on lysophosphatidylserine (LPS), and lysophosphatidylglycerol (LPG). It acts by transphosphatidylation, releasing exclusively cyclic phosphate products as second products. Induces dermonecrosis, hemolysis, increased vascular permeability, edema, inflammatory response, and platelet aggregation. This chain is Dermonecrotic toxin SdSicTox-betaIIB1biii, found in Sicarius cf. damarensis (strain GJB-2008) (Six-eyed sand spider).